The following is a 331-amino-acid chain: UPF0324 membrane protein YdhF (331 aa).

8 consecutive transmembrane segments (helical) span residues 2–20, 24–46, 82–104, 114–136, 148–170, 204–226, 247–269, and 308–330; these read SILP…SYLL, IFHS…NLYF, LGFS…VLFM, VSAL…VEPV, IAMV…TWMF, TLAT…YFGF, SFLP…IHFV, and LIYG…SLLI.

This sequence belongs to the UPF0324 family.

Its subcellular location is the cell membrane. The chain is UPF0324 membrane protein YdhF (ydhF) from Lactococcus lactis subsp. lactis (strain IL1403) (Streptococcus lactis).